A 657-amino-acid chain; its full sequence is Keratinocyte proline-rich protein (657 aa).

Disordered stretches follow at residues 285–320 (QGTYGSYTSQRRSQSTSRCLPPRRLQPSYRSCSPPR), 425–493 (HPFP…PSPE), and 517–568 (QPVP…CGQP). Residues 292-302 (TSQRRSQSTSR) show a composition bias toward low complexity. Over residues 434 to 444 (QHLDRSPESSR) the composition is skewed to basic and acidic residues. Residue serine 442 is modified to Phosphoserine. Pro residues-rich tracts occupy residues 449-493 (VPAP…PSPE), 517-530 (QPVPHPAPRPVPRP), and 539-561 (GPRPQPCPLPHPEPMPRPAPCSS).

The protein resides in the cytoplasm. The protein is Keratinocyte proline-rich protein of Mus musculus (Mouse).